Consider the following 332-residue polypeptide: Phosphate acyltransferase (332 aa).

It belongs to the PlsX family. In terms of assembly, homodimer. Probably interacts with PlsY.

The protein resides in the cytoplasm. It carries out the reaction a fatty acyl-[ACP] + phosphate = an acyl phosphate + holo-[ACP]. Its pathway is lipid metabolism; phospholipid metabolism. Functionally, catalyzes the reversible formation of acyl-phosphate (acyl-PO(4)) from acyl-[acyl-carrier-protein] (acyl-ACP). This enzyme utilizes acyl-ACP as fatty acyl donor, but not acyl-CoA. This chain is Phosphate acyltransferase, found in Caldanaerobacter subterraneus subsp. tengcongensis (strain DSM 15242 / JCM 11007 / NBRC 100824 / MB4) (Thermoanaerobacter tengcongensis).